Reading from the N-terminus, the 103-residue chain is Nucleoid-associated protein A2cp1_3777 (103 aa).

This sequence belongs to the YbaB/EbfC family. Homodimer.

Its subcellular location is the cytoplasm. It is found in the nucleoid. In terms of biological role, binds to DNA and alters its conformation. May be involved in regulation of gene expression, nucleoid organization and DNA protection. This is Nucleoid-associated protein A2cp1_3777 from Anaeromyxobacter dehalogenans (strain 2CP-1 / ATCC BAA-258).